The chain runs to 689 residues: DNA ligase (689 aa).

NAD(+)-binding positions include 40 to 44 (DAEYD), 89 to 90 (SL), and Glu121. Catalysis depends on Lys123, which acts as the N6-AMP-lysine intermediate. Arg144, Glu179, Lys295, and Lys319 together coordinate NAD(+). Positions 413, 416, 431, and 437 each coordinate Zn(2+). Positions 610-689 (KEHSSLTGKI…EEWLTIVNNV (80 aa)) constitute a BRCT domain.

Belongs to the NAD-dependent DNA ligase family. LigA subfamily. Requires Mg(2+) as cofactor. It depends on Mn(2+) as a cofactor.

It carries out the reaction NAD(+) + (deoxyribonucleotide)n-3'-hydroxyl + 5'-phospho-(deoxyribonucleotide)m = (deoxyribonucleotide)n+m + AMP + beta-nicotinamide D-nucleotide.. DNA ligase that catalyzes the formation of phosphodiester linkages between 5'-phosphoryl and 3'-hydroxyl groups in double-stranded DNA using NAD as a coenzyme and as the energy source for the reaction. It is essential for DNA replication and repair of damaged DNA. This Rickettsia canadensis (strain McKiel) protein is DNA ligase.